A 118-amino-acid polypeptide reads, in one-letter code: Small ribosomal subunit protein uS13 (118 aa).

Residues 91-118 (HRRGLPVRGQRTKTNARTRKGPRKPIKK) are disordered.

This sequence belongs to the universal ribosomal protein uS13 family. In terms of assembly, part of the 30S ribosomal subunit. Forms a loose heterodimer with protein S19. Forms two bridges to the 50S subunit in the 70S ribosome.

Located at the top of the head of the 30S subunit, it contacts several helices of the 16S rRNA. In the 70S ribosome it contacts the 23S rRNA (bridge B1a) and protein L5 of the 50S subunit (bridge B1b), connecting the 2 subunits; these bridges are implicated in subunit movement. Contacts the tRNAs in the A and P-sites. The sequence is that of Small ribosomal subunit protein uS13 from Sodalis glossinidius (strain morsitans).